A 351-amino-acid chain; its full sequence is NAD-dependent protein deacetylase SIR2rp1 (351 aa).

The Deacetylase sirtuin-type domain maps to 10-325 (HVVGEPTFEG…RSFAQALGFG (316 aa)). Residues 37–57 (GAGI…TGLY) and 122–125 (QNID) each bind NAD(+). His142 serves as the catalytic Proton acceptor. Positions 150, 153, 174, and 177 each coordinate Zn(2+). NAD(+) is bound by residues 213-215 (GTS) and 238-240 (NLE). Residues 260–284 (SSYRLSTGNGNGSKISSGDSSNSSS) form a disordered region. The segment covering 265-284 (STGNGNGSKISSGDSSNSSS) has biased composition (low complexity). An NAD(+)-binding site is contributed by Cys311.

The protein belongs to the sirtuin family. Class I subfamily. Zn(2+) serves as cofactor.

Its subcellular location is the nucleus. It is found in the chromosome. It localises to the telomere. It carries out the reaction N(6)-acetyl-L-lysyl-[protein] + NAD(+) + H2O = 2''-O-acetyl-ADP-D-ribose + nicotinamide + L-lysyl-[protein]. Its function is as follows. NAD-dependent protein deacetylase, which is involved in repression of RNA polymerase I-mediated expression immediately adjacent to telomeres. It is however not involved in antigenic variation and subtelomeric variant surface glycoprotein (VSG) gene silencing. Plays a role in DNA damage response. Also has ADP-ribosylation activity in vitro. The chain is NAD-dependent protein deacetylase SIR2rp1 (SIR2rp1) from Trypanosoma brucei brucei (strain 927/4 GUTat10.1).